A 312-amino-acid polypeptide reads, in one-letter code: DNA-directed RNA polymerase subunit alpha (312 aa).

An alpha N-terminal domain (alpha-NTD) region spans residues 1–226; sequence MIEFEKPNIT…EHFKVFESAD (226 aa). The interval 243 to 312 is alpha C-terminal domain (alpha-CTD); sequence KEKKLEMTIE…DLGLSLRQED (70 aa).

This sequence belongs to the RNA polymerase alpha chain family. In terms of assembly, homodimer. The RNAP catalytic core consists of 2 alpha, 1 beta, 1 beta' and 1 omega subunit. When a sigma factor is associated with the core the holoenzyme is formed, which can initiate transcription.

It carries out the reaction RNA(n) + a ribonucleoside 5'-triphosphate = RNA(n+1) + diphosphate. Its function is as follows. DNA-dependent RNA polymerase catalyzes the transcription of DNA into RNA using the four ribonucleoside triphosphates as substrates. This is DNA-directed RNA polymerase subunit alpha from Lactobacillus acidophilus (strain ATCC 700396 / NCK56 / N2 / NCFM).